The chain runs to 596 residues: DNA primase (596 aa).

The CHC2-type zinc-finger motif lies at 41–65 (CPFHHEKTPSFSVSQDKQIYKCFGC). The Toprim domain maps to 255–336 (DTIIIVEGYM…DIKIIKIPDG (82 aa)). Mg(2+) is bound by residues Glu261, Asp305, and Asp307.

Belongs to the DnaG primase family. As to quaternary structure, monomer. Interacts with DnaB. The cofactor is Zn(2+). Mg(2+) is required as a cofactor.

The catalysed reaction is ssDNA + n NTP = ssDNA/pppN(pN)n-1 hybrid + (n-1) diphosphate.. Functionally, RNA polymerase that catalyzes the synthesis of short RNA molecules used as primers for DNA polymerase during DNA replication. The sequence is that of DNA primase from Clostridium acetobutylicum (strain ATCC 824 / DSM 792 / JCM 1419 / IAM 19013 / LMG 5710 / NBRC 13948 / NRRL B-527 / VKM B-1787 / 2291 / W).